Consider the following 523-residue polypeptide: 2-isopropylmalate synthase (523 aa).

The Pyruvate carboxyltransferase domain maps to 5 to 267 (VIIFDTTLRD…HTAINHQEIW (263 aa)). Residues aspartate 14, histidine 202, histidine 204, and asparagine 238 each contribute to the Mn(2+) site. The segment at 392 to 523 (RLDYFSVQSG…QHNENNKETV (132 aa)) is regulatory domain.

Belongs to the alpha-IPM synthase/homocitrate synthase family. LeuA type 1 subfamily. As to quaternary structure, homodimer. Mn(2+) serves as cofactor.

Its subcellular location is the cytoplasm. The catalysed reaction is 3-methyl-2-oxobutanoate + acetyl-CoA + H2O = (2S)-2-isopropylmalate + CoA + H(+). The protein operates within amino-acid biosynthesis; L-leucine biosynthesis; L-leucine from 3-methyl-2-oxobutanoate: step 1/4. Catalyzes the condensation of the acetyl group of acetyl-CoA with 3-methyl-2-oxobutanoate (2-ketoisovalerate) to form 3-carboxy-3-hydroxy-4-methylpentanoate (2-isopropylmalate). The sequence is that of 2-isopropylmalate synthase from Escherichia coli O127:H6 (strain E2348/69 / EPEC).